A 319-amino-acid polypeptide reads, in one-letter code: R-phycoerythrin gamma chain, chloroplastic (319 aa).

The N-terminal 71 residues, 1–71, are a transit peptide targeting the chloroplast; it reads MDSPAFAVTG…RPKKLASYKR (71 aa). Phycourobilin contacts are provided by cysteine 96 and cysteine 135. Residue cysteine 212 coordinates (2R,3E)-phycoerythrobilin. Position 299 (cysteine 299) interacts with phycourobilin.

In terms of assembly, heteromer of 4 alpha, 4 beta and one gamma chains. In terms of processing, contains four covalently linked bilin chromophores.

The protein resides in the plastid. The protein localises to the chloroplast thylakoid membrane. The chain is R-phycoerythrin gamma chain, chloroplastic from Corallina officinalis (Coral seaweed).